The following is a 429-amino-acid chain: MNILIIGNGGREHALAWKVAQSPMAEKVFVAPGNAGTALEEKVENVAISATDVEKLVAFAQANHIGLTIVGPEAPLVIGVVDAFRAAGLKIFGPTKAAAQLEGSKAFTKDFLARHHIPTAEYQNFTEVEPALAYLREKGAPIVVKADGLAAGKGVIVAMTLDEAEAAVKEMLSGNAFGEAGSRVVIEEFLDGEEASFIVMVDGKNVEPMATSQDHKRVGENDTGLNTGGMGAYSPAPVVTPEIHERIMQQVIYPTVNGMAAEGNIYTGFLYAGLMIMPNGQPKVIEFNCRFGDPETQPIMLRLESDLVELCLAACDGKLDQKKSQWCEQASLGIVLAAEGYPGDYRKGDEITGIESAVENQKVFLAGVENKDGKLVTNGGRVVCVTALGDTVYDAQQQALALAEQVKWTGRFYRRDIGYRAVAREKNNA.

Residues 109–316 (KDFLARHHIP…LVELCLAACD (208 aa)) form the ATP-grasp domain. ATP is bound at residue 135-196 (LREKGAPIVV…EEFLDGEEAS (62 aa)). Residues 209-231 (MATSQDHKRVGENDTGLNTGGMG) are disordered. Mg(2+) is bound by residues glutamate 286 and asparagine 288.

This sequence belongs to the GARS family. Mg(2+) serves as cofactor. The cofactor is Mn(2+).

The enzyme catalyses 5-phospho-beta-D-ribosylamine + glycine + ATP = N(1)-(5-phospho-beta-D-ribosyl)glycinamide + ADP + phosphate + H(+). Its pathway is purine metabolism; IMP biosynthesis via de novo pathway; N(1)-(5-phospho-D-ribosyl)glycinamide from 5-phospho-alpha-D-ribose 1-diphosphate: step 2/2. This is Phosphoribosylamine--glycine ligase from Pasteurella multocida (strain Pm70).